Reading from the N-terminus, the 315-residue chain is Cytochrome f (315 aa).

The signal sequence occupies residues 1-36 (MKQSLLSVLTKKSLRLLAALFLVVTSVFSLPQAAQA). Heme-binding residues include Phe37, Cys57, Cys60, and His61. Residues 281–301 (IKWLMVFFSAIMISQTLLVLK) traverse the membrane as a helical segment.

Belongs to the cytochrome f family. As to quaternary structure, the 4 large subunits of the cytochrome b6-f complex are cytochrome b6, subunit IV (17 kDa polypeptide, PetD), cytochrome f and the Rieske protein, while the 4 small subunits are PetG, PetL, PetM and PetN. The complex functions as a dimer. The cofactor is heme.

The protein localises to the cellular thylakoid membrane. In terms of biological role, component of the cytochrome b6-f complex, which mediates electron transfer between photosystem II (PSII) and photosystem I (PSI), cyclic electron flow around PSI, and state transitions. This Acaryochloris marina (strain MBIC 11017) protein is Cytochrome f.